A 156-amino-acid polypeptide reads, in one-letter code: 6,7-dimethyl-8-ribityllumazine synthase (156 aa).

Residues F22, 57–59, and 81–83 each bind 5-amino-6-(D-ribitylamino)uracil; these read AYE and TVI. 86–87 contributes to the (2S)-2-hydroxy-3-oxobutyl phosphate binding site; sequence GT. H89 acts as the Proton donor in catalysis. F114 serves as a coordination point for 5-amino-6-(D-ribitylamino)uracil. R128 lines the (2S)-2-hydroxy-3-oxobutyl phosphate pocket.

This sequence belongs to the DMRL synthase family. Forms an icosahedral capsid composed of 60 subunits, arranged as a dodecamer of pentamers.

The catalysed reaction is (2S)-2-hydroxy-3-oxobutyl phosphate + 5-amino-6-(D-ribitylamino)uracil = 6,7-dimethyl-8-(1-D-ribityl)lumazine + phosphate + 2 H2O + H(+). The protein operates within cofactor biosynthesis; riboflavin biosynthesis; riboflavin from 2-hydroxy-3-oxobutyl phosphate and 5-amino-6-(D-ribitylamino)uracil: step 1/2. Its function is as follows. Catalyzes the formation of 6,7-dimethyl-8-ribityllumazine by condensation of 5-amino-6-(D-ribitylamino)uracil with 3,4-dihydroxy-2-butanone 4-phosphate. This is the penultimate step in the biosynthesis of riboflavin. In Sodalis glossinidius (strain morsitans), this protein is 6,7-dimethyl-8-ribityllumazine synthase.